Consider the following 210-residue polypeptide: 7-cyano-7-deazaguanine synthase 2 (210 aa).

10–20 (HSGGMDSTTCL) contributes to the ATP binding site. 4 residues coordinate Zn(2+): C180, C193, C196, and C199.

Belongs to the QueC family. Requires Zn(2+) as cofactor.

It carries out the reaction 7-carboxy-7-deazaguanine + NH4(+) + ATP = 7-cyano-7-deazaguanine + ADP + phosphate + H2O + H(+). It participates in purine metabolism; 7-cyano-7-deazaguanine biosynthesis. Catalyzes the ATP-dependent conversion of 7-carboxy-7-deazaguanine (CDG) to 7-cyano-7-deazaguanine (preQ(0)). The sequence is that of 7-cyano-7-deazaguanine synthase 2 from Rhodopseudomonas palustris (strain HaA2).